A 209-amino-acid polypeptide reads, in one-letter code: Protein N-terminal glutamine amidohydrolase (209 aa).

Active-site residues include C30, H83, and D99.

This sequence belongs to the NTAQ1 family. Monomer. As to expression, widely expressed.

The protein localises to the cytoplasm. It is found in the cytosol. Its subcellular location is the nucleus. The catalysed reaction is N-terminal L-glutaminyl-[protein] + H2O = N-terminal L-glutamyl-[protein] + NH4(+). Mediates the side-chain deamidation of N-terminal glutamine residues to glutamate, an important step in N-end rule pathway of protein degradation. Conversion of the resulting N-terminal glutamine to glutamate renders the protein susceptible to arginylation, polyubiquitination and degradation as specified by the N-end rule. Does not act on substrates with internal or C-terminal glutamine and does not act on non-glutamine residues in any position. Does not deaminate acetylated N-terminal glutamine. With the exception of proline, all tested second-position residues on substrate peptides do not greatly influence the activity. In contrast, a proline at position 2, virtually abolishes deamidation of N-terminal glutamine. In Mus musculus (Mouse), this protein is Protein N-terminal glutamine amidohydrolase (Ntaq1).